The following is a 399-amino-acid chain: Acetate kinase (399 aa).

A Mg(2+)-binding site is contributed by asparagine 7. Residue lysine 14 coordinates ATP. Arginine 90 is a binding site for substrate. The active-site Proton donor/acceptor is the aspartate 147. Residues 207 to 211 (HLGNG), 282 to 284 (DFR), and 330 to 334 (GIGEN) contribute to the ATP site. Residue glutamate 385 coordinates Mg(2+).

It belongs to the acetokinase family. As to quaternary structure, homodimer. It depends on Mg(2+) as a cofactor. Mn(2+) is required as a cofactor.

The protein localises to the cytoplasm. It carries out the reaction acetate + ATP = acetyl phosphate + ADP. Its pathway is metabolic intermediate biosynthesis; acetyl-CoA biosynthesis; acetyl-CoA from acetate: step 1/2. Its function is as follows. Catalyzes the formation of acetyl phosphate from acetate and ATP. Can also catalyze the reverse reaction. The polypeptide is Acetate kinase (Caldicellulosiruptor saccharolyticus (strain ATCC 43494 / DSM 8903 / Tp8T 6331)).